The chain runs to 122 residues: UPF0738 protein YjbL (122 aa).

This sequence belongs to the UPF0738 family.

This is UPF0738 protein YjbL (yjbL) from Bacillus subtilis (strain 168).